A 284-amino-acid polypeptide reads, in one-letter code: Cell division protein DivIB (284 aa).

Residues 1-10 (MAWLRKKEQQ) are compositionally biased toward basic and acidic residues. The segment at 1-38 (MAWLRKKEQQSDPLTPWQQYQARQQQTPRHDRRQKPKL) is disordered. At 1–56 (MAWLRKKEQQSDPLTPWQQYQARQQQTPRHDRRQKPKLDVNLPKIQTLRRRKLVKN) the chain is on the cytoplasmic side. Residues 57-77 (LVLILLPLLLLLGVFGYFASP) form a helical membrane-spanning segment. Over 78–284 (LSKVGLVSVQ…YSSSEKSSND (207 aa)) the chain is Extracellular. A POTRA domain is found at 79 to 150 (SKVGLVSVQG…NRIIIKTSEY (72 aa)).

It belongs to the FtsQ/DivIB family. DivIB subfamily.

The protein localises to the cell membrane. Cell division protein that may be involved in stabilizing or promoting the assembly of the division complex. The chain is Cell division protein DivIB from Lacticaseibacillus rhamnosus (strain ATCC 53103 / LMG 18243 / GG) (Lactobacillus rhamnosus).